A 767-amino-acid chain; its full sequence is Cilia- and flagella-associated protein 91 (767 aa).

Positions 1–29 are disordered; sequence MSHAVTIQEPQAQPQVSQTRYRERSRAGS. A compositionally biased stretch (polar residues) spans 8 to 19; that stretch reads QEPQAQPQVSQT.

The protein belongs to the CFAP91 family. In terms of assembly, part of a complex containing MYCBP, AKAP1 and PRKAR2B. Interacts with MYCBP and AKAP1. Interacts with CFAP61. Post-translationally, phosphorylated by PKA.

It localises to the cytoplasm. The protein resides in the mitochondrion. Its subcellular location is the cytoskeleton. It is found in the cilium axoneme. Its function is as follows. Involved in sperm flagellum axonemal organization and function. May regulate cilium motility through its role in the assembly of the axonemal radial spokes. The protein is Cilia- and flagella-associated protein 91 (CFAP91) of Macaca fascicularis (Crab-eating macaque).